Reading from the N-terminus, the 204-residue chain is MTERSPLRVGIGGPVGSGKTALTLNLCRALRDKYNMAVVTNDIYTKEDSNFLTRNEAMSPDRIVGVETGGCPHTAIREDASINLAAIDDLCEKFDGLELIIIESGGDNLAATFSPELSDLTLYVIDVAGGEKIPRKGGPGITKSDLLIINKTDLAPMVGANLDVMDQDAKRMRGEKPFLFSNMKTQDGLEEIIQFIEKQGLFKA.

13–20 (GPVGSGKT) is a binding site for GTP.

This sequence belongs to the SIMIBI class G3E GTPase family. UreG subfamily. In terms of assembly, homodimer. UreD, UreF and UreG form a complex that acts as a GTP-hydrolysis-dependent molecular chaperone, activating the urease apoprotein by helping to assemble the nickel containing metallocenter of UreC. The UreE protein probably delivers the nickel.

The protein resides in the cytoplasm. In terms of biological role, facilitates the functional incorporation of the urease nickel metallocenter. This process requires GTP hydrolysis, probably effectuated by UreG. This chain is Urease accessory protein UreG, found in Acinetobacter baumannii (strain AB307-0294).